The primary structure comprises 338 residues: Fructose-1,6-bisphosphatase class 1 (338 aa).

Mg(2+)-binding residues include E92, D114, L116, and D117. Substrate is bound by residues 117 to 120 and N210; that span reads DGSS. E284 is a Mg(2+) binding site.

This sequence belongs to the FBPase class 1 family. As to quaternary structure, homotetramer. Mg(2+) is required as a cofactor.

Its subcellular location is the cytoplasm. It catalyses the reaction beta-D-fructose 1,6-bisphosphate + H2O = beta-D-fructose 6-phosphate + phosphate. The protein operates within carbohydrate biosynthesis; gluconeogenesis. This chain is Fructose-1,6-bisphosphatase class 1, found in Halorhodospira halophila (strain DSM 244 / SL1) (Ectothiorhodospira halophila (strain DSM 244 / SL1)).